We begin with the raw amino-acid sequence, 163 residues long: Thiol peroxidase (163 aa).

One can recognise a Thioredoxin domain in the interval 16–162; it reads LQVGDKALDF…FEAAIAAAKA (147 aa). Catalysis depends on Cys58, which acts as the Cysteine sulfenic acid (-SOH) intermediate. Residues Cys58 and Cys92 are joined by a disulfide bond.

This sequence belongs to the peroxiredoxin family. Tpx subfamily. As to quaternary structure, homodimer.

It catalyses the reaction a hydroperoxide + [thioredoxin]-dithiol = an alcohol + [thioredoxin]-disulfide + H2O. Functionally, thiol-specific peroxidase that catalyzes the reduction of hydrogen peroxide and organic hydroperoxides to water and alcohols, respectively. Plays a role in cell protection against oxidative stress by detoxifying peroxides. This Streptococcus pneumoniae serotype 2 (strain D39 / NCTC 7466) protein is Thiol peroxidase.